The sequence spans 826 residues: 1,4-alpha-glucan-branching enzyme 1, chloroplastic/amyloplastic (826 aa).

Residues 1-58 (ATTTTTTHNSKNKQYLAKQKPVELTLGYQNPNGCKVCSFGSKGSIYQKVSSGFKGVSV) constitute a chloroplast transit peptide. Aspartate 409 serves as the catalytic Nucleophile. Catalysis depends on glutamate 464, which acts as the Proton donor. A disordered region spans residues 782–813 (DTDVARIPDVSMESEDSNLDRIEDNSEDAVDA).

Belongs to the glycosyl hydrolase 13 family. GlgB subfamily. In terms of assembly, monomer. In terms of tissue distribution, expressed in roots, leaves, stipules, pods and flowers.

It is found in the plastid. It localises to the chloroplast. The protein localises to the amyloplast. The enzyme catalyses Transfers a segment of a (1-&gt;4)-alpha-D-glucan chain to a primary hydroxy group in a similar glucan chain.. The protein operates within glycan biosynthesis; starch biosynthesis. In terms of biological role, catalyzes the formation of the alpha-1,6-glucosidic linkages in starch by scission of a 1,4-alpha-linked oligosaccharide from growing alpha-1,4-glucan chains and the subsequent attachment of the oligosaccharide to the alpha-1,6 position. May preferentially transfer long chains during branching. The chain is 1,4-alpha-glucan-branching enzyme 1, chloroplastic/amyloplastic (SBEII) from Pisum sativum (Garden pea).